The primary structure comprises 1297 residues: Protein ENHANCED DOWNY MILDEW 2 (1297 aa).

The PHD-type 1; degenerate zinc-finger motif lies at 222–281 (ESVCAICDNGGEILCCEGSCLRSFHATKKDGEDSLCDSLGFNKMQVEAIQKYFCPNCEHK). Zn(2+)-binding residues include Cys237, Cys241, Cys275, Cys278, Cys285, Cys288, Cys306, Cys311, His316, Cys319, Cys346, and His349. The segment at 282–352 (IHQCFICKNL…EYTCPLHKCS (71 aa)) adopts a PHD-type 2; atypical zinc-finger fold. The segment at 351–417 (CSVCENGEVK…RVLIYCQEHE (67 aa)) adopts a PHD-type 3; degenerate zinc-finger fold. The Nuclear localization signal 1 signature appears at 445–452 (QRRILESH). Disordered regions lie at residues 471–547 (CGKA…ARDA) and 562–598 (TQEP…IPTL). The span at 475–487 (SKNSFRSSFPSSK) shows a compositional bias: low complexity. A Nuclear localization signal 2 motif is present at residues 492 to 499 (TKKHGLVS). The segment covering 526–547 (KMMEDSREAGKNKLGVKEARDA) has biased composition (basic and acidic residues). Short sequence motifs (nuclear localization signal) lie at residues 610–617 (MKKATEEI) and 979–986 (LKKEGKTK). Composition is skewed to basic and acidic residues over residues 969–990 (QSDH…DYSG) and 1096–1109 (EVSR…RTSR). Disordered stretches follow at residues 969–1017 (QSDH…GELS), 1085–1109 (HGCK…RTSR), and 1260–1297 (FPLP…WIND).

Interacts with WNK8 in nucleus; this interaction is involved in developmental processes regulation but not in RPP7-dependent disease resistance. Interacts with EML1 and EML2 in nucleus. Component of the ASI1-AIPP1-EDM2 (AAE) RNA regulatory complex composed of at least AIPP1/EDM3, ASI1 and EDM2 and may contain CPL2, AIPP2 and AIPP3/BDT1. Binds directly to AIPP1/EDM3. Co-associates with AIPP1/EDM3 to histone H3 lysine 9 dimethylation (H3K9me2)-marked chromatin and transcripts at a critical proximal polyadenylation site of RPP7 to hamper proximal transcript polyadeylation/termination. Post-translationally, phosphorylated by WNK8.

It is found in the nucleus. Cellular antisilencing factor and regulator of genome DNA methylation patterns involved in the regulation of chromatin states. Together with SUVH4, monitors repressive epigenetic marks H3K27me1, H3K9me2, and prevents DNA-methylation at CHG sites, affecting especially the expression of transposons and developmentally important genes. Collaboratively with ASI1 and AIPP1/EDM3, the AAE complex regulates alternative RNA processing (e.g. alternative splicing) and epigenetic silencing (e.g. H3K9me2) of intronic heterochromatin-containing genes as well as genic heterochromatin-containing genes by promoting distal 3' polyadenylation. Epigenetic reader that binds DNA and contributes to transcriptional transposable element (TE) silencing by modulating levels of the repressive post-translational histone modifications (PHM) H3K9me2. In cv. Columbia, required for RPP7-dependent disease resistance against the Hyaloperonospora arabidopsidis isolate Hiks1, by promoting levels of RPP7 via alternative polyadenylation (APA), resulting from cooption of epigenetic information at the TE insertion locus COPIA-R7. Exhibits a global role in NLR (nucleotide-binding, leucine-rich repeat) defense genes epigenetic (e.g. H3K9me2 hallmarks) expression control; promotes the accumulation of RPP7, RPP4 and some other proteins, but mediates the repression of several other NLR products, probably to compensate for fitness penalties caused by defense mechanisms. Regulates development processes such as the formation of leaf pavement cells, leaf expansion, fertility and flowering. Prevents FLC accumulation to control flowering. Modulates stomatal development by regulating the methylation-mediated silencing of ERECTA receptor genes (e.g. ER, ERL1 and ERL2) and preventing cell divisions. This is Protein ENHANCED DOWNY MILDEW 2 from Arabidopsis thaliana (Mouse-ear cress).